The chain runs to 413 residues: Aspartate aminotransferase, cytoplasmic (413 aa).

L-aspartate is bound by residues G39 and W141. Residue S149 is modified to Phosphoserine. Residue N195 participates in L-aspartate binding. N6-(pyridoxal phosphate)lysine is present on K259. Position 387 (R387) interacts with L-aspartate.

This sequence belongs to the class-I pyridoxal-phosphate-dependent aminotransferase family. Homodimer. Requires pyridoxal 5'-phosphate as cofactor.

Its subcellular location is the cytoplasm. It catalyses the reaction L-aspartate + 2-oxoglutarate = oxaloacetate + L-glutamate. The enzyme catalyses L-cysteine + 2-oxoglutarate = 2-oxo-3-sulfanylpropanoate + L-glutamate. It carries out the reaction (2S)-2-aminobutanoate + 2-oxoglutarate = 2-oxobutanoate + L-glutamate. The catalysed reaction is 3-sulfino-L-alanine + 2-oxoglutarate = 3-sulfinopyruvate + L-glutamate. In terms of biological role, biosynthesis of L-glutamate from L-aspartate or L-cysteine. Important regulator of levels of glutamate, the major excitatory neurotransmitter of the vertebrate central nervous system. Acts as a scavenger of glutamate in brain neuroprotection. The aspartate aminotransferase activity is involved in hepatic glucose synthesis during development and in adipocyte glyceroneogenesis. Using L-cysteine as substrate, regulates levels of mercaptopyruvate, an important source of hydrogen sulfide. Mercaptopyruvate is converted into H(2)S via the action of 3-mercaptopyruvate sulfurtransferase (3MST). Hydrogen sulfide is an important synaptic modulator and neuroprotectant in the brain. In addition, catalyzes (2S)-2-aminobutanoate, a by-product in the cysteine biosynthesis pathway. This is Aspartate aminotransferase, cytoplasmic from Homo sapiens (Human).